A 202-amino-acid polypeptide reads, in one-letter code: MEITSAEFVISNTDVKKCPTGVFPEYAFIGRSNVGKSSLINMLTARKGLAMTSATPGKTMLINHFLINQSWYLVDLPGYGYARRGQKGKDQIRTIIEDYILEREQMTNLFVLIDSRLEPQKIDLEFMEWLGENGIPFSIIFTKADKLKGGRLKMNINNYLRELSKEWEELPPYFISSSENRTGRTEILDYIENISKEVYKNK.

Residues 22–197 enclose the EngB-type G domain; it reads VFPEYAFIGR…LDYIENISKE (176 aa). GTP-binding positions include 30-37, 57-61, 75-78, 142-145, and 173-178; these read GRSNVGKS, GKTML, DLPG, TKAD, and YFISSS. 2 residues coordinate Mg(2+): serine 37 and threonine 59.

This sequence belongs to the TRAFAC class TrmE-Era-EngA-EngB-Septin-like GTPase superfamily. EngB GTPase family. Mg(2+) is required as a cofactor.

Necessary for normal cell division and for the maintenance of normal septation. This Bacteroides thetaiotaomicron (strain ATCC 29148 / DSM 2079 / JCM 5827 / CCUG 10774 / NCTC 10582 / VPI-5482 / E50) protein is Probable GTP-binding protein EngB.